The chain runs to 105 residues: UPF0235 protein CT1832 (105 aa).

This sequence belongs to the UPF0235 family.

The sequence is that of UPF0235 protein CT1832 from Chlorobaculum tepidum (strain ATCC 49652 / DSM 12025 / NBRC 103806 / TLS) (Chlorobium tepidum).